Reading from the N-terminus, the 308-residue chain is Probable manganese-dependent inorganic pyrophosphatase (308 aa).

6 residues coordinate Mn(2+): H9, D13, D15, D75, H97, and D149.

The protein belongs to the PPase class C family. Requires Mn(2+) as cofactor.

The protein localises to the cytoplasm. It catalyses the reaction diphosphate + H2O = 2 phosphate + H(+). This Listeria innocua serovar 6a (strain ATCC BAA-680 / CLIP 11262) protein is Probable manganese-dependent inorganic pyrophosphatase.